A 797-amino-acid chain; its full sequence is Trafficking protein particle complex subunit 12 (797 aa).

Disordered stretches follow at residues Met-1 to Ser-257 and Ser-286 to Ser-338. Positions Gln-9 to Glu-23 are enriched in low complexity. Residues Met-29 to Thr-43 show a composition bias toward basic and acidic residues. A compositionally biased stretch (acidic residues) spans Gly-47 to Pro-58. Composition is skewed to basic and acidic residues over residues Phe-66–Met-75 and Ala-107–Val-121. A phosphoserine mark is found at Ser-125 and Ser-128. Thr-130 is modified (phosphothreonine). A compositionally biased stretch (basic and acidic residues) spans Val-173–Gln-185. Residues Ile-206–Gln-216 show a composition bias toward polar residues. Over residues Ser-232–Lys-244 the composition is skewed to low complexity. Phosphoserine occurs at positions 234, 309, and 314. TPR repeat units lie at residues Gly-607–Gln-640, Pro-642–Leu-675, Ile-682–Asn-715, and Ala-716–His-749.

As to quaternary structure, component of the multisubunit TRAPP (transport protein particle) complex, which includes at least TRAPPC2, TRAPPC2L, TRAPPC3, TRAPPC3L, TRAPPC4, TRAPPC5, TRAPPC8, TRAPPC9, TRAPPC10, TRAPPC11 and TRAPPC12. Interacts with CENPE. Phosphorylated as the cells enter mitosis but is dephosphorylated at or before the onset of anaphase. The phosphorylated form recruits CENPE to kinetochores more efficiently than the non-phosphorylated form.

The protein resides in the endoplasmic reticulum-Golgi intermediate compartment. It localises to the nucleus. Component of the TRAPP complex, which is involved in endoplasmic reticulum to Golgi apparatus trafficking at a very early stage. Also plays a role in chromosome congression, kinetochore assembly and stability and controls the recruitment of CENPE to the kinetochores. In Mus musculus (Mouse), this protein is Trafficking protein particle complex subunit 12.